A 282-amino-acid polypeptide reads, in one-letter code: Aquaporin PIP-type (282 aa).

2 helical membrane-spanning segments follow: residues 39–61 and 74–96; these read WRAA…ATVI and GLLG…TAGI. The NPA 1 motif lies at 102 to 104; the sequence is NPA. 4 helical membrane passes run 116 to 138, 159 to 181, 201 to 223, and 243 to 265; these read SLLR…VGLV, GYNK…YTVF, LPIG…TGIN, and HWIF…QYVL. The NPA 2 signature appears at 223–225; sequence NPA.

The protein belongs to the MIP/aquaporin (TC 1.A.8) family. PIP (TC 1.A.8.11) subfamily.

Its subcellular location is the membrane. Its function is as follows. Water-specific channel. The protein is Aquaporin PIP-type of Atriplex canescens (Fourwing saltbush).